We begin with the raw amino-acid sequence, 586 residues long: Proline--tRNA ligase (586 aa).

The protein belongs to the class-II aminoacyl-tRNA synthetase family. ProS type 1 subfamily. As to quaternary structure, homodimer.

Its subcellular location is the cytoplasm. The enzyme catalyses tRNA(Pro) + L-proline + ATP = L-prolyl-tRNA(Pro) + AMP + diphosphate. Catalyzes the attachment of proline to tRNA(Pro) in a two-step reaction: proline is first activated by ATP to form Pro-AMP and then transferred to the acceptor end of tRNA(Pro). As ProRS can inadvertently accommodate and process non-cognate amino acids such as alanine and cysteine, to avoid such errors it has two additional distinct editing activities against alanine. One activity is designated as 'pretransfer' editing and involves the tRNA(Pro)-independent hydrolysis of activated Ala-AMP. The other activity is designated 'posttransfer' editing and involves deacylation of mischarged Ala-tRNA(Pro). The misacylated Cys-tRNA(Pro) is not edited by ProRS. In Leptospira biflexa serovar Patoc (strain Patoc 1 / Ames), this protein is Proline--tRNA ligase.